We begin with the raw amino-acid sequence, 207 residues long: MEFMEIFKKWAPEYDATVNGENEEYRDVFINYSEMLNELASTAEGRVLEIGAGTGNLTLMLKDKGREVSAIDPSDDMRAIANETKNLDVQYGHFFDIPFDQPFDYIVTSFAFHHVKPEEKSDAIKTMMHSLTDDGKLLILDTMFESEKYKQDLIKYYNNQEFYNLTEDLQTEYYTYIENLKDIVNDLGLNLDMVQKNKFAWLATISK.

S-adenosyl-L-methionine is bound by residues Gly51 and Asp72.

The protein belongs to the methyltransferase superfamily. YrrT family.

Functionally, could be a S-adenosyl-L-methionine-dependent methyltransferase. This is an uncharacterized protein from Staphylococcus carnosus (strain TM300).